Here is a 295-residue protein sequence, read N- to C-terminus: Protein NEOXANTHIN-DEFICIENT 1 (295 aa).

Residues 221–251 (PAKVSGPSESDADKENSSEDQSSNVESVSRV) form a disordered region.

In terms of biological role, required for neoxanthin biosynthesis. Probably not involved directly in the enzymatic conversion of violaxanthin to neoxanthin. Is necessary but not sufficient for neoxanthin synthesis. Seems not required for abscisic acid (ABA) biosynthesis in response to drought stress. The polypeptide is Protein NEOXANTHIN-DEFICIENT 1 (Solanum lycopersicum (Tomato)).